Reading from the N-terminus, the 123-residue chain is S-adenosylmethionine decarboxylase proenzyme 2 (123 aa).

The Schiff-base intermediate with substrate; via pyruvic acid role is filled by Ser65. Residue Ser65 is modified to Pyruvic acid (Ser); by autocatalysis. His70 acts as the Proton acceptor; for processing activity in catalysis. Cys85 functions as the Proton donor; for catalytic activity in the catalytic mechanism.

This sequence belongs to the prokaryotic AdoMetDC family. Type 1 subfamily. In terms of assembly, heterotetramer of two alpha and two beta chains arranged as a dimer of alpha/beta heterodimers. Pyruvate serves as cofactor. Is synthesized initially as an inactive proenzyme. Formation of the active enzyme involves a self-maturation process in which the active site pyruvoyl group is generated from an internal serine residue via an autocatalytic post-translational modification. Two non-identical subunits are generated from the proenzyme in this reaction, and the pyruvate is formed at the N-terminus of the alpha chain, which is derived from the carboxyl end of the proenzyme. The post-translation cleavage follows an unusual pathway, termed non-hydrolytic serinolysis, in which the side chain hydroxyl group of the serine supplies its oxygen atom to form the C-terminus of the beta chain, while the remainder of the serine residue undergoes an oxidative deamination to produce ammonia and the pyruvoyl group blocking the N-terminus of the alpha chain.

The enzyme catalyses S-adenosyl-L-methionine + H(+) = S-adenosyl 3-(methylsulfanyl)propylamine + CO2. It participates in amine and polyamine biosynthesis; S-adenosylmethioninamine biosynthesis; S-adenosylmethioninamine from S-adenosyl-L-methionine: step 1/1. Functionally, catalyzes the decarboxylation of S-adenosylmethionine to S-adenosylmethioninamine (dcAdoMet), the propylamine donor required for the synthesis of the polyamines spermine and spermidine from the diamine putrescine. The chain is S-adenosylmethionine decarboxylase proenzyme 2 from Bacillus anthracis.